The sequence spans 231 residues: tRNA (guanine-N(1)-)-methyltransferase (231 aa).

Residues glycine 112 and 132-137 contribute to the S-adenosyl-L-methionine site; that span reads LGDFVL.

It belongs to the RNA methyltransferase TrmD family. In terms of assembly, homodimer.

The protein localises to the cytoplasm. It carries out the reaction guanosine(37) in tRNA + S-adenosyl-L-methionine = N(1)-methylguanosine(37) in tRNA + S-adenosyl-L-homocysteine + H(+). Its function is as follows. Specifically methylates guanosine-37 in various tRNAs. The sequence is that of tRNA (guanine-N(1)-)-methyltransferase from Gloeothece citriformis (strain PCC 7424) (Cyanothece sp. (strain PCC 7424)).